The following is a 413-amino-acid chain: Serine/threonine transporter SstT (413 aa).

9 consecutive transmembrane segments (helical) span residues 22 to 42 (GLLL…VLGF), 61 to 81 (AVAP…KQLG), 89 to 109 (IVVL…LFSF), 148 to 168 (ALFN…GIAL), 189 to 209 (IVHF…AETL), 224 to 244 (LVVL…ILVF), 305 to 325 (MAGA…TLGI), 337 to 357 (VVAS…LLLI), and 363 to 383 (LFGI…VIGV).

Belongs to the dicarboxylate/amino acid:cation symporter (DAACS) (TC 2.A.23) family.

The protein resides in the cell inner membrane. It catalyses the reaction L-serine(in) + Na(+)(in) = L-serine(out) + Na(+)(out). It carries out the reaction L-threonine(in) + Na(+)(in) = L-threonine(out) + Na(+)(out). Its function is as follows. Involved in the import of serine and threonine into the cell, with the concomitant import of sodium (symport system). This Histophilus somni (strain 129Pt) (Haemophilus somnus) protein is Serine/threonine transporter SstT.